The following is a 4644-amino-acid chain: Cytoplasmic dynein 1 heavy chain 1 (4644 aa).

Ser-2 is subject to N-acetylserine. Residues 2–1865 (SETGGGEDGS…SIQMANAKFN (1864 aa)) are stem. Coiled coils occupy residues 48 to 69 (AALE…FLSD), 179 to 200 (SVEK…NIEI), 453 to 476 (AHRK…QLRA), and 541 to 564 (TEAW…RITA). Ser-68 is modified (phosphoserine). Positions 446 to 701 (MVWRINPAHR…NTQEIFDDWA (256 aa)) are interaction with DYNC1I2. An interaction with DYNC1LI2 region spans residues 649 to 800 (AKQIDRQLTA…EKVEERNTIS (152 aa)). At Lys-1123 the chain carries N6-acetyllysine. A coiled-coil region spans residues 1169–1201 (TYVQSLKRKIKQFEKQVELYRNGQRLLEKQRFQ). The residue at position 1228 (Ser-1228) is a Phosphoserine. Coiled-coil stretches lie at residues 1229–1250 (AIQQ…AVES) and 1355–1371 (RKLR…LKNF). 4 AAA regions span residues 1866-2097 (YGFE…VLVS), 2178-2450 (EELK…LTRL), 2554-2803 (EVET…WVRG), and 2897-3166 (VFYE…GGRT). Residues 1904-1911 (GPAGTGKT) and 2222-2229 (GPSGSGKS) each bind ATP. The disordered stretch occupies residues 2389 to 2409 (EDEAQRRRKGKEDEGEEAASP). ATP-binding positions include 2593-2600 (GPPGSGKT) and 2935-2942 (GVSGAGKT). Coiled-coil stretches lie at residues 3187–3273 (EKRS…ADKQ), 3394–3498 (AIAQ…KNQM), and 3735–3798 (EFQL…VSQQ). The tract at residues 3187–3498 (EKRSELEEQQ…KTSETFKNQM (312 aa)) is stalk. Residue Lys-3478 is modified to N6-acetyllysine. AAA stretches follow at residues 3551–3780 (LSNA…EVTR) and 4003–4219 (AHMF…TVDT). Residue Ser-4160 is modified to Phosphoserine. Lys-4281 bears the N6-acetyllysine mark. The residue at position 4364 (Thr-4364) is a Phosphothreonine.

Belongs to the dynein heavy chain family. In terms of assembly, homodimer. The cytoplasmic dynein 1 complex consists of two catalytic heavy chains (HCs) and a number of non-catalytic subunits presented by intermediate chains (ICs), light intermediate chains (LICs) and light chains (LCs); the composition seems to vary in respect to the IC, LIC and LC composition. The heavy chain homodimer serves as a scaffold for the probable homodimeric assembly of the respective non-catalytic subunits. The ICs and LICs bind directly to the HC dimer and dynein LCs assemble on the IC dimer. Interacts with DYNC1LI1; DYNC1LI1 and DYNC1LI2 bind mutually exclusive to DYNC1H1. Interacts with DYNC1LI2; DYNC1LI1 and DYNC1LI2 bind mutually exclusive to DYNC1H1. Interacts with DYNC1I2. Interacts with BICD2. Interacts with DNALI1.

It is found in the cytoplasm. The protein localises to the cytoskeleton. Functionally, cytoplasmic dynein 1 acts as a motor for the intracellular retrograde motility of vesicles and organelles along microtubules. Dynein has ATPase activity; the force-producing power stroke is thought to occur on release of ADP. Plays a role in mitotic spindle assembly and metaphase plate congression. The chain is Cytoplasmic dynein 1 heavy chain 1 (Dync1h1) from Rattus norvegicus (Rat).